We begin with the raw amino-acid sequence, 55 residues long: Ferredoxin (55 aa).

4Fe-4S ferredoxin-type domains follow at residues 2-27 (YKIT…SESD) and 28-55 (AVRV…IVEG). Positions 8, 11, 14, 18, 37, 40, 43, and 47 each coordinate [4Fe-4S] cluster.

[4Fe-4S] cluster is required as a cofactor.

Its function is as follows. Ferredoxins are iron-sulfur proteins that transfer electrons in a wide variety of metabolic reactions. The chain is Ferredoxin from Clostridium sp. (strain M-E).